The primary structure comprises 297 residues: 4-diphosphocytidyl-2-C-methyl-D-erythritol kinase (297 aa).

Lys-10 is an active-site residue. 95-105 (PVAGGMAGGSA) contacts ATP. Residue Asp-137 is part of the active site.

This sequence belongs to the GHMP kinase family. IspE subfamily.

It catalyses the reaction 4-CDP-2-C-methyl-D-erythritol + ATP = 4-CDP-2-C-methyl-D-erythritol 2-phosphate + ADP + H(+). Its pathway is isoprenoid biosynthesis; isopentenyl diphosphate biosynthesis via DXP pathway; isopentenyl diphosphate from 1-deoxy-D-xylulose 5-phosphate: step 3/6. In terms of biological role, catalyzes the phosphorylation of the position 2 hydroxy group of 4-diphosphocytidyl-2C-methyl-D-erythritol. The protein is 4-diphosphocytidyl-2-C-methyl-D-erythritol kinase of Streptomyces avermitilis (strain ATCC 31267 / DSM 46492 / JCM 5070 / NBRC 14893 / NCIMB 12804 / NRRL 8165 / MA-4680).